We begin with the raw amino-acid sequence, 392 residues long: Large ribosomal subunit protein uL3 (392 aa).

The protein belongs to the universal ribosomal protein uL3 family. Component of the large ribosomal subunit (LSU). Mature N.crassa ribosomes consist of a small (40S) and a large (60S) subunit. The 40S small subunit contains 1 molecule of ribosomal RNA (18S rRNA) and at least 32 different proteins. The large 60S subunit contains 3 rRNA molecules (26S, 5.8S and 5S rRNA) and at least 42 different proteins.

It is found in the cytoplasm. In terms of biological role, component of the ribosome, a large ribonucleoprotein complex responsible for the synthesis of proteins in the cell. The small ribosomal subunit (SSU) binds messenger RNAs (mRNAs) and translates the encoded message by selecting cognate aminoacyl-transfer RNA (tRNA) molecules. The large subunit (LSU) contains the ribosomal catalytic site termed the peptidyl transferase center (PTC), which catalyzes the formation of peptide bonds, thereby polymerizing the amino acids delivered by tRNAs into a polypeptide chain. The nascent polypeptides leave the ribosome through a tunnel in the LSU and interact with protein factors that function in enzymatic processing, targeting, and the membrane insertion of nascent chains at the exit of the ribosomal tunnel. This Neurospora crassa (strain ATCC 24698 / 74-OR23-1A / CBS 708.71 / DSM 1257 / FGSC 987) protein is Large ribosomal subunit protein uL3 (rpl-3).